The sequence spans 2111 residues: Mycocerosic acid synthase-like polyketide synthase (2111 aa).

The signal sequence occupies residues 1–15 (MTQNCVAPVAIIGMA). C16 carries N-palmitoyl cysteine lipidation. Residue C16 is the site of S-diacylglycerol cysteine attachment. The 413-residue stretch at 16-428 (CRLPGAINSP…GTNVHAVLEQ (413 aa)) folds into the Ketosynthase family 3 (KS3) domain. Catalysis depends on C178, which acts as the Acyl-thioester intermediate; for beta-ketoacyl synthase activity. Catalysis depends on for beta-ketoacyl synthase activity residues H313 and H349. Positions 430–537 (PESPAETAAE…MPQQAVTNDD (108 aa)) are linker domain (LD). The acyltransferase (AT) stretch occupies residues 538 to 837 (RGPVWVFSGQ…LAVFAAMRRQ (300 aa)). The active-site Acyl-ester intermediate; for acyltransferase activity is S629. Residues 896–1176 (PSVSVHPLLG…LSAMGLQLGT (281 aa)) are dehydratase (DH). The tract at residues 901–1025 (HPLLGSHVVL…GDVDAERPAA (125 aa)) is N-terminal hotdog fold. In terms of domain architecture, PKS/mFAS DH spans 901-1183 (HPLLGSHVVL…LGTGNSDKAE (283 aa)). H934 functions as the Proton acceptor; for dehydratase activity in the catalytic mechanism. Positions 1036–1183 (PNRVDGDELR…LGTGNSDKAE (148 aa)) are C-terminal hotdog fold. Residue D1100 is the Proton donor; for dehydratase activity of the active site. Positions 1215 to 1391 (SWLVILAGDD…SPEDETAWRD (177 aa)) are pseudo beta-ketoacyl reductase (PsiKR). The enoylreductase (ER) stretch occupies residues 1419–1743 (EGMRLVVRNP…QHTGKLVIDI (325 aa)). The interval 1765–2008 (GAYVITGGLG…RSPFAELFLA (244 aa)) is beta-ketoacyl reductase (KR). Residues 1773-1776 (LGGL), 1796-1799 (SRSA), 1824-1825 (DI), and 1902-1903 (FS) contribute to the NADP(+) site. Residues 2029-2104 (EEWPTHLRRL…QRLCEMLDTD (76 aa)) form the Carrier domain. S2064 bears the O-(pantetheine 4'-phosphoryl)serine mark.

In terms of assembly, homodimer.

The protein localises to the cell membrane. It participates in lipid metabolism; fatty acid biosynthesis. Its function is as follows. Polyketide synthase involved in the biosynthesis of 2,4-dimethyl-2-eicosenoic acid, a lipid component of the lipooligosaccharides (LOS) which are not located at the bacterial surface but rather in deeper compartments of the cell envelope of M.smegmatis. The protein is Mycocerosic acid synthase-like polyketide synthase of Mycolicibacterium smegmatis (strain ATCC 700084 / mc(2)155) (Mycobacterium smegmatis).